The primary structure comprises 238 residues: Purine nucleoside phosphorylase DeoD-type (238 aa).

An a purine D-ribonucleoside-binding site is contributed by His-4. Phosphate is bound by residues Gly-20, Arg-24, Arg-43, and 87 to 90; that span reads RIGS. A purine D-ribonucleoside is bound by residues 181–183 and 205–206; these read EME and SD. Asp-206 acts as the Proton donor in catalysis.

Belongs to the PNP/UDP phosphorylase family. In terms of assembly, homohexamer; trimer of homodimers.

It catalyses the reaction a purine D-ribonucleoside + phosphate = a purine nucleobase + alpha-D-ribose 1-phosphate. The catalysed reaction is a purine 2'-deoxy-D-ribonucleoside + phosphate = a purine nucleobase + 2-deoxy-alpha-D-ribose 1-phosphate. In terms of biological role, catalyzes the reversible phosphorolytic breakdown of the N-glycosidic bond in the beta-(deoxy)ribonucleoside molecules, with the formation of the corresponding free purine bases and pentose-1-phosphate. The sequence is that of Purine nucleoside phosphorylase DeoD-type from Mycoplasma genitalium (strain ATCC 33530 / DSM 19775 / NCTC 10195 / G37) (Mycoplasmoides genitalium).